Here is a 352-residue protein sequence, read N- to C-terminus: MRFTALATAILPLACNVLALPAKTGEAPKLDVSLSQVDNTLIKAVVKNTGSEDITFVHLNFFRDKAPVKKVSLFRNATELPFQGIKQRFRTEGLTEDALTVLAPGESIEDEFDIAATSDLSEGGSITISTDGFVPIATGNKITGSVPYSSNELSIEVDAAQAASVASAVKPLDKRTKVASCSGTRSSALSTALKNTVSLANAAASAAQSGSSSRFQEYFKTTSSSVRSTVAARFRAVASEASSTSSGSTTYYCTDTYGYCSSNVLAYTLPAYNIIANCDIYYTYLSALTRTCHAQDQATTTLHEFTHAPGVYSPGTDDLGYGYDAATALSSSQALNNADTYALFANAVNLNC.

Residues 1-19 (MRFTALATAILPLACNVLA) form the signal peptide. A propeptide spanning residues 20 to 175 (LPAKTGEAPK…ASAVKPLDKR (156 aa)) is cleaved from the precursor. Disulfide bonds link cysteine 181–cysteine 253 and cysteine 260–cysteine 278. Histidine 303 contributes to the Zn(2+) binding site. The active site involves glutamate 304. Residues histidine 307 and aspartate 318 each contribute to the Zn(2+) site.

Belongs to the peptidase M35 family. Requires Zn(2+) as cofactor.

Its subcellular location is the secreted. It catalyses the reaction Preferential cleavage of bonds with hydrophobic residues in P1'. Also 3-Asn-|-Gln-4 and 8-Gly-|-Ser-9 bonds in insulin B chain.. Its function is as follows. Secreted metalloproteinase that allows assimilation of proteinaceous substrates. Shows high activities on basic nuclear substrates such as histone and protamine. The polypeptide is Neutral protease 2 homolog ATEG_04941 (Aspergillus terreus (strain NIH 2624 / FGSC A1156)).